Reading from the N-terminus, the 444-residue chain is Serine carboxypeptidase 2 (444 aa).

Substrate is bound at residue 60–62 (NGG). Intrachain disulfides connect Cys65-Cys324, Cys222-Cys234, and Cys258-Cys291. 2 N-linked (GlcNAc...) asparagine glycosylation sites follow: Asn116 and Asn127. 157–159 (ESY) serves as a coordination point for substrate. Ser158 is a catalytic residue. Asn259 is a glycosylation site (N-linked (GlcNAc...) asparagine). Positions 260 to 286 (ITSSSSSSSSSLSQQRRSRGRYPWLTG) are cleaved as a propeptide — linker peptide. Residues Asn312 and Asn318 are each glycosylated (N-linked (GlcNAc...) asparagine). Active-site residues include Asp361 and His413. 409-413 (RGAGH) provides a ligand contact to substrate.

It belongs to the peptidase S10 family. In terms of assembly, carboxypeptidase II is a dimer, where each monomer is composed of two chains linked by a disulfide bond. Post-translationally, N-glycosylated.

It carries out the reaction Preferential release of a C-terminal arginine or lysine residue.. The chain is Serine carboxypeptidase 2 (CBP2) from Triticum aestivum (Wheat).